Reading from the N-terminus, the 398-residue chain is Probable aminomethyltransferase (398 aa).

Belongs to the GcvT family. The glycine cleavage system is composed of four proteins: P, T, L and H.

The catalysed reaction is N(6)-[(R)-S(8)-aminomethyldihydrolipoyl]-L-lysyl-[protein] + (6S)-5,6,7,8-tetrahydrofolate = N(6)-[(R)-dihydrolipoyl]-L-lysyl-[protein] + (6R)-5,10-methylene-5,6,7,8-tetrahydrofolate + NH4(+). Functionally, the glycine cleavage system catalyzes the degradation of glycine. This Thermococcus kodakarensis (strain ATCC BAA-918 / JCM 12380 / KOD1) (Pyrococcus kodakaraensis (strain KOD1)) protein is Probable aminomethyltransferase.